The chain runs to 721 residues: Ribonucleoside-diphosphate reductase subunit alpha (721 aa).

Residues threonine 159, 175–176, glycine 204, 384–388, and 589–593 contribute to the substrate site; these read SC, NLCSE, and PTGSI. A disulfide bridge links cysteine 176 with cysteine 413. Asparagine 384 functions as the Proton acceptor in the catalytic mechanism. Catalysis depends on cysteine 386, which acts as the Cysteine radical intermediate. Glutamate 388 acts as the Proton acceptor in catalysis.

The protein belongs to the ribonucleoside diphosphate reductase large chain family. Tetramer of two alpha and two beta subunits.

It carries out the reaction a 2'-deoxyribonucleoside 5'-diphosphate + [thioredoxin]-disulfide + H2O = a ribonucleoside 5'-diphosphate + [thioredoxin]-dithiol. Under complex allosteric control mediated by deoxynucleoside triphosphates and ATP binding. The type of nucleotide bound at the specificity site determines substrate preference. It seems probable that ATP makes the enzyme reduce CDP and UDP, dGTP favors ADP reduction and dTTP favors GDP reduction. Functionally, provides the precursors necessary for DNA synthesis. Catalyzes the biosynthesis of deoxyribonucleotides from the corresponding ribonucleotides. This is Ribonucleoside-diphosphate reductase subunit alpha (nrdE) from Mycoplasma pneumoniae (strain ATCC 29342 / M129 / Subtype 1) (Mycoplasmoides pneumoniae).